A 129-amino-acid chain; its full sequence is Small ribosomal subunit protein uS11c (129 aa).

Belongs to the universal ribosomal protein uS11 family. In terms of assembly, part of the 30S ribosomal subunit.

Its subcellular location is the plastid. It is found in the chloroplast. This Oltmannsiellopsis viridis (Marine flagellate) protein is Small ribosomal subunit protein uS11c.